An 85-amino-acid polypeptide reads, in one-letter code: RDS3 complex subunit 10 (85 aa).

In terms of assembly, belongs to the SF3b complex composed of CUS1, HSH49, HSH155, RCP1, RDS3 and RSE1.

It is found in the nucleus. In terms of biological role, involved in pre-mRNA splicing. Required for the SF3b integrity and prespliceosome assembly. In Saccharomyces cerevisiae (strain ATCC 204508 / S288c) (Baker's yeast), this protein is RDS3 complex subunit 10 (YSF3).